A 100-amino-acid polypeptide reads, in one-letter code: Urease subunit gamma (100 aa).

This sequence belongs to the urease gamma subunit family. In terms of assembly, heterotrimer of UreA (gamma), UreB (beta) and UreC (alpha) subunits. Three heterotrimers associate to form the active enzyme.

The protein localises to the cytoplasm. The enzyme catalyses urea + 2 H2O + H(+) = hydrogencarbonate + 2 NH4(+). It participates in nitrogen metabolism; urea degradation; CO(2) and NH(3) from urea (urease route): step 1/1. The protein is Urease subunit gamma of Mycolicibacterium smegmatis (strain ATCC 700084 / mc(2)155) (Mycobacterium smegmatis).